A 401-amino-acid chain; its full sequence is Alternative oxidase, mitochondrial (401 aa).

A disordered region spans residues 53 to 81 (KRASLSLQPSVREAEKSQGPVVGSEGRGV). A helical membrane pass occupies residues 184–204 (LFRIILLESIAGVPGMVGGTL). The Fe cation site is built by glutamate 191, glutamate 230, and histidine 233. Residues 249-269 (ALVLAAQGVFYNAFFLTYLIS) traverse the membrane as a helical segment. Fe cation is bound by residues glutamate 281, glutamate 282, glutamate 335, and histidine 338.

The protein belongs to the alternative oxidase family. It depends on Fe cation as a cofactor.

It localises to the mitochondrion inner membrane. Its function is as follows. Catalyzes cyanide-resistant oxygen consumption. May increase respiration when the cytochrome respiratory pathway is restricted, or in response to low temperatures. The polypeptide is Alternative oxidase, mitochondrial (AOX1) (Cryptococcus neoformans var. grubii serotype A (strain H99 / ATCC 208821 / CBS 10515 / FGSC 9487) (Filobasidiella neoformans var. grubii)).